Reading from the N-terminus, the 311-residue chain is Transcription factor MafB (311 aa).

Disordered stretches follow at residues 35–78 and 150–199; these read PLGR…PTEQ and EDLA…EDRF. Residues 54–76 show a composition bias toward low complexity; it reads SVSSTPISTPCSSVPSSPSFSPT. Over residues 157 to 167 the composition is skewed to basic residues; it reads HPHHHHHHHHQ. Positions 168 to 194 are enriched in low complexity; it reads ASPTPSTSSSSSQQLQTSHQQHPPSSS. The tract at residues 226-251 is basic motif; the sequence is RLKQKRRTLKNRGYAQSCRYKRVQQK. The bZIP domain maps to 226–289; sequence RLKQKRRTLK…DAYKLKCEKL (64 aa). Residues 254 to 275 form a leucine-zipper region; sequence LENEKTQLIQQVEQLKQEVTRL.

This sequence belongs to the bZIP family. Maf subfamily. Homodimer or heterodimer with other bHLH-Zip transcription factors. Binds DNA as a homodimer or heterodimer. Self-associates; the interaction requires the intact MAFB leucine-zipper domain. Interacts with FOS, HOXD12 and PRRX1. As to expression, expressed in brain, thymus, gut, lung, mesenterium, spleen, kidney, ovary and bursa.

Its subcellular location is the nucleus. Acts as a transcriptional activator or repressor. Positively regulates the expression of alpha-A crystallin genes during lens fiber cell differentiation. Binds to Maf recognition elements (MARE). The polypeptide is Transcription factor MafB (MAFB) (Gallus gallus (Chicken)).